The following is a 331-amino-acid chain: L-lactate dehydrogenase A chain (331 aa).

NAD(+)-binding positions include 29–57 (GMVG…MEDK) and R98. Substrate contacts are provided by R105, N137, and R168. NAD(+) is bound at residue N137. The active-site Proton acceptor is the H192. T247 provides a ligand contact to substrate.

It belongs to the LDH/MDH superfamily. LDH family. As to quaternary structure, homotetramer.

Its subcellular location is the cytoplasm. The enzyme catalyses (S)-lactate + NAD(+) = pyruvate + NADH + H(+). The protein operates within fermentation; pyruvate fermentation to lactate; (S)-lactate from pyruvate: step 1/1. Functionally, interconverts simultaneously and stereospecifically pyruvate and lactate with concomitant interconversion of NADH and NAD(+). This chain is L-lactate dehydrogenase A chain (ldha), found in Notothenia angustata (Rockcod).